Reading from the N-terminus, the 285-residue chain is Phosphatidylglycerol--prolipoprotein diacylglyceryl transferase (285 aa).

4 consecutive transmembrane segments (helical) span residues 26-46 (IALH…WWYV), 71-91 (FVVW…VLIW), 107-127 (WDGG…IIWF), and 133-153 (INIW…IGVV). Arginine 154 is a binding site for a 1,2-diacyl-sn-glycero-3-phospho-(1'-sn-glycerol). The next 3 membrane-spanning stretches (helical) occupy residues 194–214 (LMEG…FKAF), 218–238 (GTVA…SEIF), and 256–276 (GFTY…YAIF).

This sequence belongs to the Lgt family.

It localises to the cell inner membrane. The enzyme catalyses L-cysteinyl-[prolipoprotein] + a 1,2-diacyl-sn-glycero-3-phospho-(1'-sn-glycerol) = an S-1,2-diacyl-sn-glyceryl-L-cysteinyl-[prolipoprotein] + sn-glycerol 1-phosphate + H(+). The protein operates within protein modification; lipoprotein biosynthesis (diacylglyceryl transfer). Functionally, catalyzes the transfer of the diacylglyceryl group from phosphatidylglycerol to the sulfhydryl group of the N-terminal cysteine of a prolipoprotein, the first step in the formation of mature lipoproteins. The polypeptide is Phosphatidylglycerol--prolipoprotein diacylglyceryl transferase (Bartonella bacilliformis (strain ATCC 35685 / KC583 / Herrer 020/F12,63)).